The sequence spans 419 residues: Serine--tRNA ligase (419 aa).

The interval 45-66 is disordered; sequence ADSLRAEQKAASKSVGGASPEE. 226–228 provides a ligand contact to L-serine; that stretch reads TSE. ATP-binding positions include 257–259 and V273; that span reads RRE. E280 serves as a coordination point for L-serine. Residue 344–347 coordinates ATP; that stretch reads ELTS. T379 is a binding site for L-serine.

Belongs to the class-II aminoacyl-tRNA synthetase family. Type-1 seryl-tRNA synthetase subfamily. Homodimer. The tRNA molecule binds across the dimer.

It is found in the cytoplasm. It catalyses the reaction tRNA(Ser) + L-serine + ATP = L-seryl-tRNA(Ser) + AMP + diphosphate + H(+). It carries out the reaction tRNA(Sec) + L-serine + ATP = L-seryl-tRNA(Sec) + AMP + diphosphate + H(+). Its pathway is aminoacyl-tRNA biosynthesis; selenocysteinyl-tRNA(Sec) biosynthesis; L-seryl-tRNA(Sec) from L-serine and tRNA(Sec): step 1/1. Functionally, catalyzes the attachment of serine to tRNA(Ser). Is also able to aminoacylate tRNA(Sec) with serine, to form the misacylated tRNA L-seryl-tRNA(Sec), which will be further converted into selenocysteinyl-tRNA(Sec). This chain is Serine--tRNA ligase, found in Mycobacterium ulcerans (strain Agy99).